The primary structure comprises 214 residues: Cutinase CUT2 (214 aa).

An N-terminal signal peptide occupies residues 1–18 (MQFSLSIATAILAATASA). A disulfide bridge connects residues C40 and C117. S128 acts as the Nucleophile in catalysis. A disulfide bridge links C179 with C186. The active site involves D183. The active-site Proton donor/acceptor is H196.

This sequence belongs to the cutinase family. Post-translationally, the 2 disulfide bonds play a critical role in holding the catalytic residues in juxta-position; reduction of the disulfide bridges results in the complete inactivation of the enzyme.

It is found in the secreted. The catalysed reaction is cutin + H2O = cutin monomers.. Catalyzes the hydrolysis of complex carboxylic polyesters found in the cell wall of plants. Degrades cutin, a macromolecule that forms the structure of the plant cuticle. Required for efficient penetration of the host plant cuticle by the appressorium during the initial stage of fungal infection. The chain is Cutinase CUT2 from Pyricularia oryzae (strain 70-15 / ATCC MYA-4617 / FGSC 8958) (Rice blast fungus).